A 255-amino-acid chain; its full sequence is 5'-nucleotidase SurE (255 aa).

A divalent metal cation-binding residues include Asp8, Asp9, Ser40, and Asn93.

The protein belongs to the SurE nucleotidase family. Requires a divalent metal cation as cofactor.

The protein localises to the cytoplasm. The catalysed reaction is a ribonucleoside 5'-phosphate + H2O = a ribonucleoside + phosphate. Functionally, nucleotidase that shows phosphatase activity on nucleoside 5'-monophosphates. This chain is 5'-nucleotidase SurE, found in Rhodopseudomonas palustris (strain BisB5).